The chain runs to 877 residues: Oligopeptide transporter 2 (877 aa).

The Cytoplasmic segment spans residues 1–167 (MSETVKDKVI…DPTIPVETFR (167 aa)). A helical membrane pass occupies residues 168–188 (AYFLAIIWSVIGSGFNEFFSH). Residue R189 is a topological domain, extracellular. A helical transmembrane segment spans residues 190 to 210 (VVSISLNTPIIQMFLYICGKA). The Cytoplasmic portion of the chain corresponds to 211-240 (WAKTIPCWTITIRGRKYGINIDKPWTQKEQ). Residues 241–261 (MFSTLLYAICQGAFYTHYNIL) form a helical membrane-spanning segment. At 262-272 (TQKLFYHSAFS) the chain is on the extracellular side. The chain crosses the membrane as a helical span at residues 273 to 293 (FGYQFLLSLSVQFIGFGFAGI). Residues 294 to 334 (LRKFVVYPARALWPTVMPTIAINKALLGKEKHESGMSRYKF) lie on the Cytoplasmic side of the membrane. Residues 335-355 (FFLTFFIMFIYNWFPTYIINI) traverse the membrane as a helical segment. The Extracellular segment spans residues 356-374 (LNTFNWMTWIKPSNINLAN). N-linked (GlcNAc...) asparagine glycosylation is present at N374. The helical transmembrane segment at 375 to 395 (ITGGVTGLGINPISSFDWNVI) threads the bilayer. The Cytoplasmic segment spans residues 396–404 (SFNSPLVYP). The helical transmembrane segment at 405–425 (FWSYLTQYLGCILAALIVIAV) threads the bilayer. The Extracellular segment spans residues 426–480 (YYSNYMSCQYLPIFTNSLYTNTGHSFKVTEVLDSDNKLDVKKYQSYSPPYYSAGN). A helical membrane pass occupies residues 481-501 (LVSYGAFICAYPLMITWSFIV). Over 502–553 (HSKLLFNAFKDWALNLWAMRKLKSWVTMFKSDYRALDDYDDPHSNAMKNYKE) the chain is Cytoplasmic. Residues 554–574 (VPDWWYFAILIGSLVVGIAVV) traverse the membrane as a helical segment. Topologically, residues 575 to 582 (EHYPTNTP) are extracellular. The chain crosses the membrane as a helical span at residues 583–603 (VWGLFVCLGFNFVFLIPTTIL). At 604–614 (QATTGYSFGLN) the chain is on the cytoplasmic side. A helical membrane pass occupies residues 615 to 635 (LLIEMVMGYALPGNPIAIMIL). Topologically, residues 636–671 (KAFGYNIDGQADNYVSNLKIAHYCKIPPMALFRGQC) are extracellular. A helical membrane pass occupies residues 672–692 (VIVFIQIFVNLGVLNWQISNI). The Cytoplasmic segment spans residues 693 to 730 (KDFCTPHQNAKFTCPDAVTYYNASVVWGAIGPKRIFNY). Residues 731–751 (IYPIFKWCWLIGACIGIFFGV) traverse the membrane as a helical segment. Residues 752 to 766 (WKRWGKFYPRYFDPM) are Extracellular-facing. A helical membrane pass occupies residues 767 to 789 (LFVGGMLNMSPPYNLMYYTSGMI). Topologically, residues 790-811 (VSYISQYYMKRHHLNLWEKYNY) are cytoplasmic. A helical transmembrane segment spans residues 812 to 832 (VLSAGFSTGLVLSAIIIFFAV). Residues 833–877 (QYKDTAFNWWGNTVPYAGADGVGYPLKNITDTANGYFGYAPGHYP) are Extracellular-facing. Residue N860 is glycosylated (N-linked (GlcNAc...) asparagine).

It belongs to the oligopeptide OPT transporter family.

It localises to the membrane. In terms of biological role, transports tetra- and pentapeptides. Does not transport glutathione. The sequence is that of Oligopeptide transporter 2 (OPT2) from Saccharomyces cerevisiae (strain ATCC 204508 / S288c) (Baker's yeast).